The chain runs to 673 residues: Methionine--tRNA ligase (673 aa).

The 'HIGH' region motif lies at 15-25; the sequence is PYANGPIHLGH. Residues cysteine 146, cysteine 149, cysteine 159, and cysteine 162 each coordinate Zn(2+). Residues 332–336 carry the 'KMSKS' region motif; sequence KMSKS. Lysine 335 is a binding site for ATP. One can recognise a tRNA-binding domain in the interval 572-673; the sequence is DFAKLDLRIA…EGAQPGMRVK (102 aa).

This sequence belongs to the class-I aminoacyl-tRNA synthetase family. MetG type 1 subfamily. As to quaternary structure, homodimer. Zn(2+) serves as cofactor.

The protein resides in the cytoplasm. It catalyses the reaction tRNA(Met) + L-methionine + ATP = L-methionyl-tRNA(Met) + AMP + diphosphate. In terms of biological role, is required not only for elongation of protein synthesis but also for the initiation of all mRNA translation through initiator tRNA(fMet) aminoacylation. The sequence is that of Methionine--tRNA ligase from Shewanella loihica (strain ATCC BAA-1088 / PV-4).